Reading from the N-terminus, the 1492-residue chain is ATP-binding cassette sub-family C member 10 (1492 aa).

The next 9 membrane-spanning stretches (helical) occupy residues 32-52 (LVLSALPHALLAVLSACYLGT), 70-90 (LAASFLLSVFPLLDLLPVALP), 102-122 (VLAGCVAAVAWISHSLALWVL), 133-153 (PLALALVALLPAPALVLTVLW), 172-192 (LCLLILQLAALLAYALGWAAP), 293-313 (LVGTMLGFSGPLLLSLLVGFL), 320-340 (LSHGLLYALGLAGGAVLGAVL), 391-411 (LLNFAGSFHEAWGLPLQLAIT), and 414-434 (LLYQQVGVAFVGGLILALLLV). The region spanning 285 to 563 (YLALGLLKLV…FPWVINGLLE (279 aa)) is the ABC transmembrane type-1 1 domain. Threonine 463 is subject to Phosphothreonine. Serine 467 bears the Phosphoserine mark. 2 consecutive transmembrane segments (helical) span residues 507–527 (VYLWAALPVVISIVIFITYVL) and 538–558 (FTALALVRMLILPLNNFPWVI). Positions 598-824 (LELHGALFSW…VQAVPKAWAE (227 aa)) constitute an ABC transporter 1 domain. Position 633–640 (633–640 (GKVGCGKS)) interacts with ATP. Residues 825 to 860 (NGQESDSATAQSVQNPEKTKEGLEEEQSTSGRLLQE) are disordered. Over residues 826–840 (GQESDSATAQSVQNP) the composition is skewed to polar residues. The next 6 helical transmembrane spans lie at 875-895 (AYWKAVGQGLALAILFSLLLM), 933-953 (LFSPQLLLFSPGNLYIPVFPL), 974-994 (IAGVNSLCTLLRAVLFAAGTL), 1051-1071 (AGLLGLLAVLGSGLPWLLLLL), 1153-1173 (IRLQLMGAAVVSAIAGIALVQ), and 1182-1202 (GLVGLSLSYALSLTGLLSGLV). Residues 885-1210 (ALAILFSLLL…LVSSFTQTEA (326 aa)) enclose the ABC transmembrane type-1 2 domain. The ABC transporter 2 domain occupies 1246–1479 (VEFQDVVLAY…PHSLFQQLLQ (234 aa)). 1280–1287 (GRTGSGKS) contributes to the ATP binding site.

Belongs to the ABC transporter superfamily. ABCC family. Conjugate transporter (TC 3.A.1.208) subfamily. In testis, localized to peritubular myoid cells, Leydig cells, along the basal membrane of Sertoli cells, moderately in the adluminal compartment of the seminiferous tubules, and in vascular endothelial cells. In terms of tissue distribution, specifically expressed in spleen. As to expression, widely expressed.

Its subcellular location is the cell membrane. It localises to the basolateral cell membrane. It is found in the basal cell membrane. The enzyme catalyses ATP + H2O + xenobioticSide 1 = ADP + phosphate + xenobioticSide 2.. The catalysed reaction is an S-substituted glutathione(in) + ATP + H2O = an S-substituted glutathione(out) + ADP + phosphate + H(+). It catalyses the reaction 17beta-estradiol 17-O-(beta-D-glucuronate)(in) + ATP + H2O = 17beta-estradiol 17-O-(beta-D-glucuronate)(out) + ADP + phosphate + H(+). It carries out the reaction leukotriene C4(in) + ATP + H2O = leukotriene C4(out) + ADP + phosphate + H(+). Its function is as follows. ATP-dependent transporter of the ATP-binding cassette (ABC) family that actively extrudes physiological compounds, and xenobiotics from cells. Lipophilic anion transporter that mediates ATP-dependent transport of glucuronide conjugates such as estradiol-17-beta-o-glucuronide and GSH conjugates such as leukotriene C4 (LTC4). May contribute to regulate the transport of organic compounds in testes across the blood-testis-barrier. Mediates multidrug resistance (MDR) in cancer cells by preventing the intracellular accumulation of certain antitumor drugs, such as, docetaxel and paclitaxel. Does not transport glycocholic acid, taurocholic acid, MTX, folic acid, cAMP, or cGMP. The chain is ATP-binding cassette sub-family C member 10 (ABCC10) from Homo sapiens (Human).